The primary structure comprises 393 residues: MLQRHSLKLGKFSIRTLATGAPLDASKLKITRNPNPSKPRPNEELVFGQTFTDHMLTIPWSAKEGWGTPHIKPYGNLSLDPSACVFHYAFELFEGLKAYRTPQNTITMFRPDKNMARMNKSAARICLPTFESEELIKLTGKLIEQDKHLVPQGNGYSLYIRPTMIGTSKGLGVGTPSEALLYVITSPVGPYYKTGFKAVRLEATDYATRAWPGGVGDKKLGANYAPCILPQLQAAKRGYQQNLWLFGPEKNITEVGTMNVFFVFLNKVTGKKELVTAPLDGTILEGVTRDSVLTLARDKLDPQEWDINERYYTITEVATRAKQGELLEAFGSGTAAVVSPIKEIGWNNEDIHVPLLPGEQCGALTKQVAQWIADIQYGRVNYGNWSKTVADLN.

Residues 1-16 (MLQRHSLKLGKFSIRT) constitute a mitochondrion transit peptide. N6-(pyridoxal phosphate)lysine is present on lysine 219. The residue at position 315 (threonine 315) is a Phosphothreonine.

The protein belongs to the class-IV pyridoxal-phosphate-dependent aminotransferase family. It depends on pyridoxal 5'-phosphate as a cofactor.

It is found in the mitochondrion matrix. It catalyses the reaction L-leucine + 2-oxoglutarate = 4-methyl-2-oxopentanoate + L-glutamate. The enzyme catalyses L-isoleucine + 2-oxoglutarate = (S)-3-methyl-2-oxopentanoate + L-glutamate. It carries out the reaction L-valine + 2-oxoglutarate = 3-methyl-2-oxobutanoate + L-glutamate. The catalysed reaction is a 2-oxocarboxylate + L-methionine = 4-methylsulfanyl-2-oxobutanoate + an L-alpha-amino acid. The protein operates within amino-acid biosynthesis; L-isoleucine biosynthesis; L-isoleucine from 2-oxobutanoate: step 4/4. It participates in amino-acid biosynthesis; L-leucine biosynthesis; L-leucine from 3-methyl-2-oxobutanoate: step 4/4. Its pathway is amino-acid biosynthesis; L-valine biosynthesis; L-valine from pyruvate: step 4/4. It functions in the pathway amino-acid biosynthesis; L-methionine biosynthesis via salvage pathway; L-methionine from S-methyl-5-thio-alpha-D-ribose 1-phosphate: step 6/6. Its function is as follows. Mitochondrial isozyme of branched-chain-amino-acid aminotransferase, involved in the biosynthesis of the branched chain amino acids (BCAAs) leucine, isoleucine, and valine. Catalyzes the formation of methionine from 2-keto-4-methylthiobutyrate (KMTB) in the methionine salvage pathway primarily using BCAAs (leucine, isoleucine, and valine) as the amino donors. Appears to be involved in the regulation of the cell cycle, although this may be indirect via metabolic changes. Connects BCAAs and TCA-cycle metabolism governing TCA-cycle flux to activate TORC1 signaling. High copy suppressor of a temperature-sensitive mutation in the ABC transporter, ATM1. The protein is Branched-chain-amino-acid aminotransferase, mitochondrial of Saccharomyces cerevisiae (strain ATCC 204508 / S288c) (Baker's yeast).